Consider the following 494-residue polypeptide: UPF0371 protein spyM18_1356 (494 aa).

Belongs to the UPF0371 family.

The sequence is that of UPF0371 protein spyM18_1356 from Streptococcus pyogenes serotype M18 (strain MGAS8232).